The primary structure comprises 141 residues: Hemoglobin subunit alpha-D (141 aa).

In terms of domain architecture, Globin spans 1 to 141 (MLTADDKKIL…VAAVLAEKYR (141 aa)). Residues His-58 and His-87 each contribute to the heme b site.

It belongs to the globin family. As to quaternary structure, heterotetramer of two alpha-D chains and two beta chains. Red blood cells.

In terms of biological role, involved in oxygen transport from the lung to the various peripheral tissues. The chain is Hemoglobin subunit alpha-D (HBAD) from Branta canadensis (Canada goose).